The sequence spans 126 residues: Aspartate 1-decarboxylase (126 aa).

The active-site Schiff-base intermediate with substrate; via pyruvic acid is S25. A Pyruvic acid (Ser) modification is found at S25. T57 contacts substrate. Y58 acts as the Proton donor in catalysis. 72 to 74 serves as a coordination point for substrate; that stretch reads GAA.

The protein belongs to the PanD family. Heterooctamer of four alpha and four beta subunits. Pyruvate serves as cofactor. Post-translationally, is synthesized initially as an inactive proenzyme, which is activated by self-cleavage at a specific serine bond to produce a beta-subunit with a hydroxyl group at its C-terminus and an alpha-subunit with a pyruvoyl group at its N-terminus.

It localises to the cytoplasm. The enzyme catalyses L-aspartate + H(+) = beta-alanine + CO2. Its pathway is cofactor biosynthesis; (R)-pantothenate biosynthesis; beta-alanine from L-aspartate: step 1/1. Functionally, catalyzes the pyruvoyl-dependent decarboxylation of aspartate to produce beta-alanine. This is Aspartate 1-decarboxylase from Campylobacter jejuni subsp. jejuni serotype O:23/36 (strain 81-176).